Reading from the N-terminus, the 300-residue chain is NADH-cytochrome b5 reductase 1 (300 aa).

A helical transmembrane segment spans residues 8 to 28 (PLVVFATVATIIISFVTLYFF). A compositionally biased stretch (low complexity) spans 34–45 (SSTTSSSSSSSS). Positions 34–54 (SSTTSSSSSSSSKSKKGSPAL) are disordered. Residues 57 to 160 (DKFQKFPLIS…RGPKGFFTYT (104 aa)) enclose the FAD-binding FR-type domain. FAD-binding positions include 140 to 155 (AEKQVGDFVEIRGPKG) and 166 to 198 (SLGLIAGGTGIAPMYQIITAIMNNPEDKTKVHL).

This sequence belongs to the flavoprotein pyridine nucleotide cytochrome reductase family. As to quaternary structure, monomer. Component of the 2-(3-amino-3-carboxypropyl)histidine synthase complex composed of DPH1, DPH2, DPH3 and a NADH-dependent reductase, predominantly CBR1. FAD serves as cofactor.

It is found in the mitochondrion outer membrane. The enzyme catalyses 2 Fe(III)-[cytochrome b5] + NADH = 2 Fe(II)-[cytochrome b5] + NAD(+) + H(+). The catalysed reaction is 2 Fe(3+)-[Dph3] + NADH = 2 Fe(2+)-[Dph3] + NAD(+) + H(+). It participates in protein modification; peptidyl-diphthamide biosynthesis. In terms of biological role, NADH-dependent reductase for DPH3 and cytochrome b5. Required for the first step of diphthamide biosynthesis, a post-translational modification of histidine which occurs in elongation factor 2. DPH1 and DPH2 transfer a 3-amino-3-carboxypropyl (ACP) group from S-adenosyl-L-methionine (SAM) to a histidine residue, the reaction is assisted by a reduction system comprising DPH3 and a NADH-dependent reductase, predominantly CBR1. By reducing DPH3, also involved in the formation of the tRNA wobble base modification mcm5s 2U (5-methoxycarbonylmethyl-2-thiouridine), mediated by the elongator complex. The cytochrome b5/NADH cytochrome b5 reductase electron transfer system supports the catalytic activity of several sterol biosynthetic enzymes. In Lodderomyces elongisporus (strain ATCC 11503 / CBS 2605 / JCM 1781 / NBRC 1676 / NRRL YB-4239) (Yeast), this protein is NADH-cytochrome b5 reductase 1 (CBR1).